A 402-amino-acid chain; its full sequence is CCA-adding enzyme (402 aa).

ATP-binding residues include glycine 32 and arginine 35. CTP contacts are provided by glycine 32 and arginine 35. Mg(2+)-binding residues include aspartate 45 and aspartate 47. Arginine 116, aspartate 159, arginine 162, arginine 165, and arginine 168 together coordinate ATP. The CTP site is built by arginine 116, aspartate 159, arginine 162, arginine 165, and arginine 168.

The protein belongs to the tRNA nucleotidyltransferase/poly(A) polymerase family. Bacterial CCA-adding enzyme type 3 subfamily. Homodimer. Mg(2+) serves as cofactor.

The catalysed reaction is a tRNA precursor + 2 CTP + ATP = a tRNA with a 3' CCA end + 3 diphosphate. It catalyses the reaction a tRNA with a 3' CCA end + 2 CTP + ATP = a tRNA with a 3' CCACCA end + 3 diphosphate. Its function is as follows. Catalyzes the addition and repair of the essential 3'-terminal CCA sequence in tRNAs without using a nucleic acid template. Adds these three nucleotides in the order of C, C, and A to the tRNA nucleotide-73, using CTP and ATP as substrates and producing inorganic pyrophosphate. tRNA 3'-terminal CCA addition is required both for tRNA processing and repair. Also involved in tRNA surveillance by mediating tandem CCA addition to generate a CCACCA at the 3' terminus of unstable tRNAs. While stable tRNAs receive only 3'-terminal CCA, unstable tRNAs are marked with CCACCA and rapidly degraded. The chain is CCA-adding enzyme from Streptococcus pyogenes serotype M6 (strain ATCC BAA-946 / MGAS10394).